A 298-amino-acid chain; its full sequence is N-acetylmuramic acid 6-phosphate etherase (298 aa).

Residues 55 to 218 form the SIS domain; the sequence is IHAQVSGGGR…STGLMIKSGK (164 aa). Residue E83 is the Proton donor of the active site. E114 is a catalytic residue.

Belongs to the GCKR-like family. MurNAc-6-P etherase subfamily. As to quaternary structure, homodimer.

The enzyme catalyses N-acetyl-D-muramate 6-phosphate + H2O = N-acetyl-D-glucosamine 6-phosphate + (R)-lactate. It functions in the pathway amino-sugar metabolism; N-acetylmuramate degradation. It participates in amino-sugar metabolism; 1,6-anhydro-N-acetylmuramate degradation. The protein operates within cell wall biogenesis; peptidoglycan recycling. In terms of biological role, specifically catalyzes the cleavage of the D-lactyl ether substituent of MurNAc 6-phosphate, producing GlcNAc 6-phosphate and D-lactate. Together with AnmK, is also required for the utilization of anhydro-N-acetylmuramic acid (anhMurNAc) either imported from the medium or derived from its own cell wall murein, and thus plays a role in cell wall recycling. This chain is N-acetylmuramic acid 6-phosphate etherase, found in Escherichia coli (strain K12 / MC4100 / BW2952).